The following is a 561-amino-acid chain: NADH-quinone oxidoreductase subunit C/D (561 aa).

Residues 1 to 152 form an NADH dehydrogenase I subunit C region; that stretch reads MLEKFSSKFN…YQVLYESDDL (152 aa). The tract at residues 176–561 is NADH dehydrogenase I subunit D; sequence KYTFLNIGPS…LNIIAGELDR (386 aa).

In the N-terminal section; belongs to the complex I 30 kDa subunit family. This sequence in the C-terminal section; belongs to the complex I 49 kDa subunit family. As to quaternary structure, NDH-1 is composed of 13 different subunits. Subunits NuoB, CD, E, F, and G constitute the peripheral sector of the complex.

It is found in the cell inner membrane. It carries out the reaction a quinone + NADH + 5 H(+)(in) = a quinol + NAD(+) + 4 H(+)(out). Its function is as follows. NDH-1 shuttles electrons from NADH, via FMN and iron-sulfur (Fe-S) centers, to quinones in the respiratory chain. The immediate electron acceptor for the enzyme in this species is believed to be ubiquinone. Couples the redox reaction to proton translocation (for every two electrons transferred, four hydrogen ions are translocated across the cytoplasmic membrane), and thus conserves the redox energy in a proton gradient. The polypeptide is NADH-quinone oxidoreductase subunit C/D (Campylobacter fetus subsp. fetus (strain 82-40)).